A 411-amino-acid polypeptide reads, in one-letter code: Multidrug resistance protein MdtA (411 aa).

The signal sequence occupies residues 1-26 (MNNNKKTKKRFSLIIILLIVIAGAIA). Polar residues predominate over residues 35 to 55 (SAPPVSKDTPTANTPNRSTAG). The segment at 35 to 64 (SAPPVSKDTPTANTPNRSTAGSRRPPMPPV) is disordered.

This sequence belongs to the membrane fusion protein (MFP) (TC 8.A.1) family. In terms of assembly, part of a tripartite efflux system composed of MdtA, MdtB and MdtC.

It localises to the cell inner membrane. The protein is Multidrug resistance protein MdtA of Proteus mirabilis (strain HI4320).